Reading from the N-terminus, the 332-residue chain is Nuclear hormone receptor family member nhr-9 (332 aa).

A DNA-binding region (nuclear receptor) is located at residues 11 to 85; that stretch reads ERRCAICSKL…MGMRIVTNQY (75 aa). 2 consecutive NR C4-type zinc fingers follow at residues 14 to 34 and 50 to 73; these read CAIC…CNAC and CINN…YNKC. An NR LBD domain is found at 101 to 332; sequence DRSNKLMNFQ…KRLCAELLGA (232 aa).

It belongs to the nuclear hormone receptor family.

The protein localises to the nucleus. Functionally, orphan nuclear receptor. In Caenorhabditis elegans, this protein is Nuclear hormone receptor family member nhr-9 (nhr-9).